The chain runs to 176 residues: Disulfide bond formation protein B (176 aa).

The Cytoplasmic segment spans residues 1 to 14 (MLRFLNQCSQGRGA). The chain crosses the membrane as a helical span at residues 15–31 (WLLMAFTALALELTALW). Residues 32 to 49 (FQHVMLLKPCVLCIYERC) lie on the Periplasmic side of the membrane. A disulfide bond links Cys-41 and Cys-44. Residues 50–65 (ALFGVLGAALIGAIAP) traverse the membrane as a helical segment. The Cytoplasmic portion of the chain corresponds to 66–71 (KTPLRY). The helical transmembrane segment at 72-89 (VAMVIWLYSAFRGVQLTY) threads the bilayer. Over 90-144 (EHTMLQLYPSPFATCDFMARFPEWLPLDKWVPQVFVASGDCAERQWEFLGLEMPQ) the chain is Periplasmic. An intrachain disulfide couples Cys-104 to Cys-130. Residues 145–163 (WLLGIFIAYLIVAVLVVIS) form a helical membrane-spanning segment. Topologically, residues 164–176 (QPFKAKKRDLFGR) are cytoplasmic.

It belongs to the DsbB family.

It is found in the cell inner membrane. Its function is as follows. Required for disulfide bond formation in some periplasmic proteins. Acts by oxidizing the DsbA protein. In Escherichia coli O1:K1 / APEC, this protein is Disulfide bond formation protein B.